An 839-amino-acid polypeptide reads, in one-letter code: Probable alpha-glucuronidase A (839 aa).

The N-terminal stretch at 1 to 18 (MRWSFLTVLLWLVSLTGA) is a signal peptide. N-linked (GlcNAc...) asparagine glycosylation is found at Asn-49, Asn-101, Asn-148, Asn-221, Asn-278, Asn-309, Asn-342, Asn-464, Asn-526, Asn-575, Asn-681, and Asn-731.

It belongs to the glycosyl hydrolase 67 family.

It is found in the secreted. It catalyses the reaction an alpha-D-glucuronoside + H2O = D-glucuronate + an alcohol. Functionally, alpha-glucuronidase involved in the hydrolysis of xylan, a major structural heterogeneous polysaccharide found in plant biomass representing the second most abundant polysaccharide in the biosphere, after cellulose. Releases 4-O-methylglucuronic acid from xylan. The sequence is that of Probable alpha-glucuronidase A (aguA) from Aspergillus flavus (strain ATCC 200026 / FGSC A1120 / IAM 13836 / NRRL 3357 / JCM 12722 / SRRC 167).